A 632-amino-acid chain; its full sequence is MAEETQHNKLAAAKKKLKEYWQKNSPRVPAGANRNRKTNGSVPEKATSGGCQPPGDSATGFHREGPTSSATLKDLESPCQERAVVLDSRSVEISQLKNTIKSLKQQKKQVEHQLEEEKKANNKKQKAKRVLEVQIQTLNIQKGKLNTDLYHMKRSLRYFEEKSKDLAVCLQHSLQRKGELESVLSNVMATQKKKANQLSSRSKARTEWKLEQSMREEALLKVQLTQLKESFQQVQLERDECAEHLKGERARWQQRMRKMSQEICTLKKEKQQDMRRVEKLERSLSKLKNQMAEPLPPEPPAVPSEVELQHLRKELERVAGELQAQVKKNQRISLLNQRQEERIQEQEERLRKQEERIQEQHKSLQQLAKPQSVFEEPNNENKNALQLEQQVKELQEKLGEEHLEAASQQNQQLTAQLSLMALPGEGHGGEHLDSEGEEAPRPMPSVPEDPESREAMSSFMDHLEEKADLSELVKKKELCFIHHWRDRCHQKTHHLLSEPGGRAKDAALGGGHHQAGAQGGDEGEAAGAAADGIAAYSNYNNGHRKFLAAAHNSADEPGPGAPAPQELGAADKHGDLCEVSLTSSAQGEAREDPLLDKPTAQPIVQDHQEHPGLGSNCCVPLLCWAWLPRRRR.

The tract at residues 1–77 (MAEETQHNKL…SSATLKDLES (77 aa)) is disordered. Coiled coils occupy residues 110–201 (VEHQ…LSSR) and 240–468 (ECAE…EKAD). Basic and acidic residues-rich tracts occupy residues 352–362 (KQEERIQEQHK) and 427–440 (HGGE…EEAP). Disordered stretches follow at residues 352 to 379 (KQEE…EPNN), 423 to 452 (PGEG…DPES), and 496 to 524 (LSEP…DEGE). Positions 508–520 (LGGGHHQAGAQGG) are enriched in gly residues.

This sequence belongs to the GOLGA8 family.

This is Golgin subfamily A member 8H (GOLGA8H) from Homo sapiens (Human).